A 287-amino-acid polypeptide reads, in one-letter code: ATP synthase gamma chain (287 aa).

Belongs to the ATPase gamma chain family. As to quaternary structure, F-type ATPases have 2 components, CF(1) - the catalytic core - and CF(0) - the membrane proton channel. CF(1) has five subunits: alpha(3), beta(3), gamma(1), delta(1), epsilon(1). CF(0) has three main subunits: a, b and c.

It localises to the cell inner membrane. Produces ATP from ADP in the presence of a proton gradient across the membrane. The gamma chain is believed to be important in regulating ATPase activity and the flow of protons through the CF(0) complex. This is ATP synthase gamma chain from Colwellia psychrerythraea (strain 34H / ATCC BAA-681) (Vibrio psychroerythus).